The chain runs to 480 residues: 6-phosphogluconate dehydrogenase, decarboxylating (480 aa).

Residues 11-16, 34-36, 76-78, and Asn-104 each bind NADP(+); these read GLAVMG, NRS, and IKA. Substrate is bound by residues Asn-104 and 130–132; that span reads SGG. Lys-184 serves as the catalytic Proton acceptor. 187–188 lines the substrate pocket; the sequence is HN. The Proton donor role is filled by Glu-191. Substrate-binding residues include Tyr-192, Lys-261, Arg-288, Arg-448, and His-454.

It belongs to the 6-phosphogluconate dehydrogenase family. As to quaternary structure, homodimer.

The catalysed reaction is 6-phospho-D-gluconate + NADP(+) = D-ribulose 5-phosphate + CO2 + NADPH. It participates in carbohydrate degradation; pentose phosphate pathway; D-ribulose 5-phosphate from D-glucose 6-phosphate (oxidative stage): step 3/3. Functionally, catalyzes the oxidative decarboxylation of 6-phosphogluconate to ribulose 5-phosphate and CO(2), with concomitant reduction of NADP to NADPH. The protein is 6-phosphogluconate dehydrogenase, decarboxylating (gnd) of Chlamydia trachomatis serovar D (strain ATCC VR-885 / DSM 19411 / UW-3/Cx).